The chain runs to 276 residues: Protein PXR1 (276 aa).

The interval 1 to 23 is disordered; sequence MGLAGTKIKQRFGNDPRNTNWSN. The G-patch domain occupies 25-71; sequence TSRFGHQYLAKMGWQQGSGLGLVSHALTTHVKVSIKDDNLGLGAKLH. Basic and acidic residues predominate over residues 152-172; sequence DDGKKSRKRKADESETKEDKK. A disordered region spans residues 152–261; sequence DDGKKSRKRK…SKWIKQKRAS (110 aa). Residues 173–218 are compositionally biased toward basic residues; sequence TLKKHKKEKKDKKEKKEKKKKKEKKDKKDKKDKKNKKDKKDKKDKK. The segment covering 219-228 has biased composition (basic and acidic residues); sequence DKKDKIRTGS. Over residues 229–239 the composition is skewed to polar residues; it reads DETLVSKESSA.

It belongs to the PINX1 family.

It localises to the nucleus. The protein resides in the nucleolus. Its function is as follows. Involved in rRNA-processing at A0, A1 and A2 sites and negatively regulates telomerase. In Candida albicans (strain SC5314 / ATCC MYA-2876) (Yeast), this protein is Protein PXR1 (PXR1).